Here is a 316-residue protein sequence, read N- to C-terminus: Holliday junction branch migration complex subunit RuvB (316 aa).

The large ATPase domain (RuvB-L) stretch occupies residues 1–165 (MQITRPHNFE…FGYIARFVSY (165 aa)). ATP is bound by residues Arg5, Gly46, Lys49, Thr50, Ser51, 112–114 (EDF), Arg155, Tyr165, and Arg202. Thr50 is a binding site for Mg(2+). A small ATPAse domain (RuvB-S) region spans residues 166–236 (NAEDMKQIIR…IIKKTFKSLD (71 aa)). Residues 239–316 (EYGLTKDHVE…TYLLKEKLIW (78 aa)) form a head domain (RuvB-H) region. Positions 294 and 299 each coordinate DNA.

Belongs to the RuvB family. As to quaternary structure, homohexamer. Forms an RuvA(8)-RuvB(12)-Holliday junction (HJ) complex. HJ DNA is sandwiched between 2 RuvA tetramers; dsDNA enters through RuvA and exits via RuvB. An RuvB hexamer assembles on each DNA strand where it exits the tetramer. Each RuvB hexamer is contacted by two RuvA subunits (via domain III) on 2 adjacent RuvB subunits; this complex drives branch migration. In the full resolvosome a probable DNA-RuvA(4)-RuvB(12)-RuvC(2) complex forms which resolves the HJ.

It is found in the cytoplasm. It catalyses the reaction ATP + H2O = ADP + phosphate + H(+). Its function is as follows. The RuvA-RuvB-RuvC complex processes Holliday junction (HJ) DNA during genetic recombination and DNA repair, while the RuvA-RuvB complex plays an important role in the rescue of blocked DNA replication forks via replication fork reversal (RFR). RuvA specifically binds to HJ cruciform DNA, conferring on it an open structure. The RuvB hexamer acts as an ATP-dependent pump, pulling dsDNA into and through the RuvAB complex. RuvB forms 2 homohexamers on either side of HJ DNA bound by 1 or 2 RuvA tetramers; 4 subunits per hexamer contact DNA at a time. Coordinated motions by a converter formed by DNA-disengaged RuvB subunits stimulates ATP hydrolysis and nucleotide exchange. Immobilization of the converter enables RuvB to convert the ATP-contained energy into a lever motion, pulling 2 nucleotides of DNA out of the RuvA tetramer per ATP hydrolyzed, thus driving DNA branch migration. The RuvB motors rotate together with the DNA substrate, which together with the progressing nucleotide cycle form the mechanistic basis for DNA recombination by continuous HJ branch migration. Branch migration allows RuvC to scan DNA until it finds its consensus sequence, where it cleaves and resolves cruciform DNA. In Mycoplasmopsis synoviae (strain 53) (Mycoplasma synoviae), this protein is Holliday junction branch migration complex subunit RuvB.